The primary structure comprises 727 residues: Calpain-like protease 1 (727 aa).

The Calpain catalytic domain occupies 70–317 (SRFYPPIPIS…FKQLYLNWNQ (248 aa)). Active-site residues include cysteine 128, histidine 271, and asparagine 296.

The protein belongs to the peptidase C2 family. PalB/RIM13 subfamily. Interacts with SNF7, which may act together with RIM20 as a scaffold to recruit RIM13 to its substrate RIM101.

Required for the proteolytic cleavage of the transcriptional repressor RIM101 in response to alkaline ambient pH, which is necessary for sporulation and invasive growth. Probably the protease that cleaves RIM101. This chain is Calpain-like protease 1 (RIM13), found in Saccharomyces cerevisiae (strain ATCC 204508 / S288c) (Baker's yeast).